We begin with the raw amino-acid sequence, 431 residues long: Adenylosuccinate synthetase (431 aa).

GTP is bound by residues 12–18 (GDEGKGK) and 40–42 (GHT). D13 acts as the Proton acceptor in catalysis. Mg(2+) is bound by residues D13 and G40. IMP is bound by residues 13–16 (DEGK), 38–41 (NAGH), T131, R145, Q225, T240, and R304. H41 serves as the catalytic Proton donor. 300–306 (TVTGRKR) provides a ligand contact to substrate. GTP is bound by residues R306, 332 to 334 (KLD), and 414 to 416 (STS).

It belongs to the adenylosuccinate synthetase family. As to quaternary structure, homodimer. It depends on Mg(2+) as a cofactor.

The protein resides in the cytoplasm. The enzyme catalyses IMP + L-aspartate + GTP = N(6)-(1,2-dicarboxyethyl)-AMP + GDP + phosphate + 2 H(+). It participates in purine metabolism; AMP biosynthesis via de novo pathway; AMP from IMP: step 1/2. Plays an important role in the de novo pathway of purine nucleotide biosynthesis. Catalyzes the first committed step in the biosynthesis of AMP from IMP. The chain is Adenylosuccinate synthetase from Roseobacter denitrificans (strain ATCC 33942 / OCh 114) (Erythrobacter sp. (strain OCh 114)).